Here is a 198-residue protein sequence, read N- to C-terminus: Phosphoheptose isomerase (198 aa).

The SIS domain maps to 40 to 198 (IIGALRGGHK…IEAALMQDAR (159 aa)). 55 to 57 (NGG) provides a ligand contact to substrate. Residues His-64 and Glu-68 each contribute to the Zn(2+) site. Substrate-binding positions include Glu-68, 97 to 98 (ND), 123 to 125 (STS), Ser-128, and Gln-175. Residues Gln-175 and His-183 each contribute to the Zn(2+) site.

Belongs to the SIS family. GmhA subfamily. In terms of assembly, homotetramer. The cofactor is Zn(2+).

It is found in the cytoplasm. It catalyses the reaction 2 D-sedoheptulose 7-phosphate = D-glycero-alpha-D-manno-heptose 7-phosphate + D-glycero-beta-D-manno-heptose 7-phosphate. The protein operates within carbohydrate biosynthesis; D-glycero-D-manno-heptose 7-phosphate biosynthesis; D-glycero-alpha-D-manno-heptose 7-phosphate and D-glycero-beta-D-manno-heptose 7-phosphate from sedoheptulose 7-phosphate: step 1/1. Catalyzes the isomerization of sedoheptulose 7-phosphate in D-glycero-D-manno-heptose 7-phosphate. The sequence is that of Phosphoheptose isomerase from Bradyrhizobium sp. (strain ORS 278).